The sequence spans 417 residues: Transmembrane protease serine 11G (417 aa).

The Cytoplasmic segment spans residues 1–22 (MYQPGILGRRKRVCKPWTVALT). A helical; Signal-anchor for type II membrane protein membrane pass occupies residues 23–43 (TTAALLALAVLIGLLVYFLVY). Topologically, residues 44–417 (EEKTHYYQAS…RNWIKSKTNI (374 aa)) are extracellular. Positions 46–165 (KTHYYQASFW…PYLREMNAAQ (120 aa)) constitute an SEA domain. One can recognise a Peptidase S1 domain in the interval 186–416 (IADGKPAGSN…YRNWIKSKTN (231 aa)). Cysteine 211 and cysteine 227 are joined by a disulfide. Active-site charge relay system residues include histidine 226 and aspartate 271. Intrachain disulfides connect cysteine 336–cysteine 352 and cysteine 363–cysteine 392. The Charge relay system role is filled by serine 367.

This sequence belongs to the peptidase S1 family. In terms of tissue distribution, highest expression in lung and tongue. Also expressed in brain, colon, heart and liver. Isoform 1 is the predominant form in tongue whereas both isoforms are expressed in similar amounts in lung. At the cellular level, expression is confined to epithelial cells within the cleft of the circumvallate papillae extending into the ducts of the minor salivary glands, the respiratory epithelium of the nasal cavity and tear gland ducts.

Its subcellular location is the membrane. This chain is Transmembrane protease serine 11G (Tmprss11g), found in Rattus norvegicus (Rat).